The chain runs to 251 residues: Hydroxyacylglutathione hydrolase (251 aa).

Positions 53, 55, 57, 58, 110, 127, and 165 each coordinate Zn(2+).

The protein belongs to the metallo-beta-lactamase superfamily. Glyoxalase II family. As to quaternary structure, monomer. Zn(2+) serves as cofactor.

The enzyme catalyses an S-(2-hydroxyacyl)glutathione + H2O = a 2-hydroxy carboxylate + glutathione + H(+). It participates in secondary metabolite metabolism; methylglyoxal degradation; (R)-lactate from methylglyoxal: step 2/2. In terms of biological role, thiolesterase that catalyzes the hydrolysis of S-D-lactoyl-glutathione to form glutathione and D-lactic acid. In Yersinia pseudotuberculosis serotype IB (strain PB1/+), this protein is Hydroxyacylglutathione hydrolase.